Reading from the N-terminus, the 310-residue chain is Tagatose-6-phosphate kinase (310 aa).

The protein belongs to the carbohydrate kinase PfkB family. LacC subfamily.

It carries out the reaction D-tagatofuranose 6-phosphate + ATP = D-tagatofuranose 1,6-bisphosphate + ADP + H(+). It functions in the pathway carbohydrate metabolism; D-tagatose 6-phosphate degradation; D-glyceraldehyde 3-phosphate and glycerone phosphate from D-tagatose 6-phosphate: step 1/2. The protein is Tagatose-6-phosphate kinase of Staphylococcus epidermidis (strain ATCC 35984 / DSM 28319 / BCRC 17069 / CCUG 31568 / BM 3577 / RP62A).